We begin with the raw amino-acid sequence, 132 residues long: Small ribosomal subunit protein uS8c (132 aa).

This sequence belongs to the universal ribosomal protein uS8 family. In terms of assembly, part of the 30S ribosomal subunit.

It localises to the plastid. The protein localises to the chloroplast. Its function is as follows. One of the primary rRNA binding proteins, it binds directly to 16S rRNA central domain where it helps coordinate assembly of the platform of the 30S subunit. The sequence is that of Small ribosomal subunit protein uS8c (rps8) from Psilotum nudum (Whisk fern).